Here is a 92-residue protein sequence, read N- to C-terminus: DNA-binding protein HU (92 aa).

It belongs to the bacterial histone-like protein family. As to quaternary structure, homodimer.

Histone-like DNA-binding protein which is capable of wrapping DNA to stabilize it, and thus to prevent its denaturation under extreme environmental conditions. The protein is DNA-binding protein HU (hup) of Buchnera aphidicola subsp. Baizongia pistaciae (strain Bp).